We begin with the raw amino-acid sequence, 83 residues long: Defensin-like protein 194 (83 aa).

Positions 1–27 (MAMKSVSNFAIFLILFLVTSEISEIEA) are cleaved as a signal peptide. 4 disulfide bridges follow: C32/C78, C44/C68, C53/C73, and C57/C75.

It belongs to the DEFL family. Protease inhibitor I18 (RTI/MTI-2) subfamily.

It localises to the secreted. This chain is Defensin-like protein 194 (ATTI3), found in Arabidopsis thaliana (Mouse-ear cress).